Consider the following 478-residue polypeptide: Sugar transporter ERD6-like 15 (478 aa).

The next 12 helical transmembrane spans lie at 31 to 51 (FVLA…IIGY), 67 to 87 (IADY…GALI), 106 to 126 (ILFV…LLDL), 129 to 149 (LLQG…ITEI), 161 to 181 (FAQL…TIVA), 185 to 205 (LAIL…FIPE), 267 to 287 (AFSL…GLNG), 305 to 325 (FGFI…TVLV), 333 to 353 (LLLV…ISFF), 366 to 386 (VLAL…MGSI), 406 to 426 (MCNL…SYLL), and 432 to 452 (GTFL…AKLV).

It belongs to the major facilitator superfamily. Sugar transporter (TC 2.A.1.1) family.

It localises to the membrane. Sugar transporter. The sequence is that of Sugar transporter ERD6-like 15 from Arabidopsis thaliana (Mouse-ear cress).